We begin with the raw amino-acid sequence, 130 residues long: Iron-sulfur cluster insertion protein ErpA (130 aa).

Iron-sulfur cluster is bound by residues Cys-58, Cys-122, and Cys-124.

Belongs to the HesB/IscA family. As to quaternary structure, homodimer. It depends on iron-sulfur cluster as a cofactor.

Its function is as follows. Required for insertion of 4Fe-4S clusters for at least IspG. The chain is Iron-sulfur cluster insertion protein ErpA from Stenotrophomonas maltophilia (strain K279a).